Consider the following 466-residue polypeptide: 23S rRNA (uracil(1939)-C(5))-methyltransferase RlmD (466 aa).

Residues 1–22 (MSSQPNPTSHPEAASAASAASN) form a disordered region. Residues 17 to 81 (ASAASNDPVV…PSYEQAHLVE (65 aa)) form the TRAM domain. 4 residues coordinate [4Fe-4S] cluster: C94, C100, C103, and C182. Positions 290, 319, 324, 340, 368, and 389 each coordinate S-adenosyl-L-methionine. The active-site Nucleophile is the C422.

This sequence belongs to the class I-like SAM-binding methyltransferase superfamily. RNA M5U methyltransferase family. RlmD subfamily.

The catalysed reaction is uridine(1939) in 23S rRNA + S-adenosyl-L-methionine = 5-methyluridine(1939) in 23S rRNA + S-adenosyl-L-homocysteine + H(+). Functionally, catalyzes the formation of 5-methyl-uridine at position 1939 (m5U1939) in 23S rRNA. This chain is 23S rRNA (uracil(1939)-C(5))-methyltransferase RlmD, found in Cupriavidus metallidurans (strain ATCC 43123 / DSM 2839 / NBRC 102507 / CH34) (Ralstonia metallidurans).